Consider the following 148-residue polypeptide: UPF0260 protein YPK_2117 (148 aa).

Belongs to the UPF0260 family.

The sequence is that of UPF0260 protein YPK_2117 from Yersinia pseudotuberculosis serotype O:3 (strain YPIII).